A 416-amino-acid chain; its full sequence is Muscle-specific homeobox protein tinman (416 aa).

Composition is skewed to polar residues over residues 1 to 11 and 18 to 33; these read MLQHHQQQAQS and YTQS…ADAL. Disordered stretches follow at residues 1–33, 246–305, and 391–416; these read MLQH…ADAL, TASN…RKPR, and VMWP…MQHM. Residues 281 to 295 show a composition bias toward low complexity; it reads NSISGNSNPGSNSGS. Positions 301–360 form a DNA-binding region, homeobox; sequence KRKPRVLFSQAQVLELECRFRLKKYLTGAEREIIAQKLNLSATQVKIWFQNRRYKSKRGD. A compositionally biased stretch (low complexity) spans 397 to 416; it reads MQQSQQQQQHHAQQQQMQHM.

The protein resides in the nucleus. Its function is as follows. Required for the development of heart and visceral muscle; for the formation of somatic muscles. Has a crucial function in the early mesodermal subdivisions. In Drosophila melanogaster (Fruit fly), this protein is Muscle-specific homeobox protein tinman (tin).